The chain runs to 199 residues: Glycerol-3-phosphate acyltransferase (199 aa).

The next 5 helical transmembrane spans lie at 4–24 (FALF…AILI), 56–76 (LAVL…GYYL), 80–100 (QFEL…PIFF), 115–135 (IAPI…FVFL), and 154–176 (YVWW…LIYR).

The protein belongs to the PlsY family. As to quaternary structure, probably interacts with PlsX.

The protein resides in the cell inner membrane. The catalysed reaction is an acyl phosphate + sn-glycerol 3-phosphate = a 1-acyl-sn-glycero-3-phosphate + phosphate. The protein operates within lipid metabolism; phospholipid metabolism. Catalyzes the transfer of an acyl group from acyl-phosphate (acyl-PO(4)) to glycerol-3-phosphate (G3P) to form lysophosphatidic acid (LPA). This enzyme utilizes acyl-phosphate as fatty acyl donor, but not acyl-CoA or acyl-ACP. This is Glycerol-3-phosphate acyltransferase from Haemophilus influenzae (strain PittEE).